Consider the following 731-residue polypeptide: Putative beta-galactosidase (731 aa).

A signal peptide spans 1–29; sequence MLCGKENNVMKMMLVYVFVLITLISCVYG. The active-site Proton donor is E187. Catalysis depends on E257, which acts as the Nucleophile.

This sequence belongs to the glycosyl hydrolase 35 family. As to expression, senescing flower petals.

The catalysed reaction is Hydrolysis of terminal non-reducing beta-D-galactose residues in beta-D-galactosides.. This chain is Putative beta-galactosidase (CARSR12), found in Dianthus caryophyllus (Carnation).